Here is a 393-residue protein sequence, read N- to C-terminus: Trehalose import ATP-binding protein SugC (393 aa).

One can recognise an ABC transporter domain in the interval 4-235; it reads IVLDHVNKSY…PANLFVAGFI (232 aa). 37–44 contributes to the ATP binding site; sequence GPSGCGKT. A Helical C-loop; LSGGQ motif motif is present at residues 135 to 139; sequence LSGGQ.

It belongs to the ABC transporter superfamily. In terms of assembly, monomer. Homodimerizes in the presence of ATP. The complex is composed of two ATP-binding proteins (SugC), two transmembrane proteins (SugA and SugB) and a solute-binding protein (LpqY).

It is found in the cell inner membrane. It carries out the reaction alpha,alpha-trehalose(out) + ATP + H2O = alpha,alpha-trehalose(in) + ADP + phosphate + H(+). Part of the ABC transporter complex LpqY-SugA-SugB-SugC, which is highly specific for uptake of trehalose. Involved in the recycling of extracellular trehalose released from trehalose-containing molecules synthesized by M.tuberculosis. Trehalose uptake is essential for virulence. Responsible for energy coupling to the transport system. This is Trehalose import ATP-binding protein SugC (sugC) from Mycobacterium tuberculosis (strain CDC 1551 / Oshkosh).